A 372-amino-acid chain; its full sequence is Glutamate 5-kinase (372 aa).

Lysine 14 is a binding site for ATP. Substrate contacts are provided by serine 54, aspartate 141, and asparagine 153. ATP is bound by residues 173 to 174 (TD) and 215 to 221 (TGGMSTK). The 79-residue stretch at 280–358 (QGSLVLDAGA…DEIESVLGYD (79 aa)) folds into the PUA domain.

This sequence belongs to the glutamate 5-kinase family.

Its subcellular location is the cytoplasm. The enzyme catalyses L-glutamate + ATP = L-glutamyl 5-phosphate + ADP. It participates in amino-acid biosynthesis; L-proline biosynthesis; L-glutamate 5-semialdehyde from L-glutamate: step 1/2. Catalyzes the transfer of a phosphate group to glutamate to form L-glutamate 5-phosphate. The protein is Glutamate 5-kinase of Shewanella oneidensis (strain ATCC 700550 / JCM 31522 / CIP 106686 / LMG 19005 / NCIMB 14063 / MR-1).